The chain runs to 283 residues: uncharacterized protein (283 aa).

One can recognise an HTH rpiR-type domain in the interval 3–79 (TGGLAIIQSM…MRVAGDLAKP (77 aa)). The segment at residues 39 to 58 (VNEISALANSSDAAVIRLCK) is a DNA-binding region (H-T-H motif). One can recognise an SIS domain in the interval 123 to 264 (AVSLLLKAHT…FLGMAAEQYE (142 aa)).

This is an uncharacterized protein from Bacillus subtilis (strain 168).